The chain runs to 439 residues: Prenyltransferase iacE (439 aa).

Substrate is bound by residues 88–89, glutamate 97, arginine 112, lysine 198, tyrosine 200, arginine 271, lysine 273, and tyrosine 275; that span reads WI.

The protein belongs to the tryptophan dimethylallyltransferase family.

The enzyme catalyses siccayne + dimethylallyl diphosphate = pestalodiol + diphosphate. It functions in the pathway secondary metabolite biosynthesis. Prenyltransferase; part of the gene cluster that mediates the biosynthesis of iso-A82775C, a enylepoxycyclohexane and biosynthetic precursor of the chloropestolide anticancer natural products. Within the cluster, the prenyltransferase iacE prenylates siccayne to generate pestalodiol E, using dimethylallyl diphosphate (DMAPP) as cosubstrate. The probable oxidoreductase iacF is then involved in the epoxidation of pestalodiol F to pestalodiol F, which is further converted to pestalofone A by the short-chain dehydrogenase/reductase iacG. Iso-A82775C is subsequently generated from pestalofone A by the short-chain dehydrogenase/reductase iacC. Iso-A82775C is further condensed with maldoxin via a Diels-Alder reaction to produce the anticancer natural products chloropestolides A to E. The chain is Prenyltransferase iacE from Pestalotiopsis fici (strain W106-1 / CGMCC3.15140).